A 505-amino-acid chain; its full sequence is OVARIAN TUMOR DOMAIN-containing deubiquitinating enzyme 6 (505 aa).

The segment at 1–191 (MTRILVQRGS…NSSDEHMPCY (191 aa)) is disordered. Low complexity predominate over residues 9–30 (GSSGSSSNSSRPSSSSSSSSGS). Residues 51-72 (DEKQEEVTVVEKAECSDAKDVA) are compositionally biased toward basic and acidic residues. Residues 73–86 (VDSDEPADREDDEG) are compositionally biased toward acidic residues. The segment covering 115–124 (PPVPAPPPKP) has biased composition (pro residues). Residues 159–173 (SSRSSPTGSHPSSPR) are compositionally biased toward low complexity. Basic and acidic residues predominate over residues 174-188 (SHSENEGYNSSDEHM). An OTU domain is found at 216–339 (FEIRRMLEDG…GNHYNSLVDP (124 aa)). The active site involves Asp-224. Cys-227 (nucleophile) is an active-site residue. Residue His-332 is part of the active site. The disordered stretch occupies residues 416–447 (RIGPKESSTSNAETSSSGARPSGSDSKPAEAV). The segment covering 421 to 441 (ESSTSNAETSSSGARPSGSDS) has biased composition (low complexity). Positions 446–491 (AVKEKTVLSSSIEMVLSMGFSYAQAMEAYSIFGDDVDSMVCYVLET) constitute a UBA domain.

It belongs to the peptidase C85 family. In terms of assembly, interacts with KDM1C. Mostly expressed in stems flowers and siliques, and, to a lower extent, in leaves, roots and seedlings.

It localises to the nucleus. It is found in the cytoplasm. The enzyme catalyses Thiol-dependent hydrolysis of ester, thioester, amide, peptide and isopeptide bonds formed by the C-terminal Gly of ubiquitin (a 76-residue protein attached to proteins as an intracellular targeting signal).. Its function is as follows. Hydrolase that can remove conjugated ubiquitin from proteins in vitro and may therefore play an important regulatory role at the level of protein turnover by preventing degradation. Binds chromatin (e.g. nucleosomes and histones) and has enzymatic histone deubiquitinase activity, specific for the H2B histone. Can both repress (e.g. OSR2) and promote (e.g. AN3) the expression of target genes by associating with chromatin, deubiquitinating H2B and regulating its euchromatic histone marks (e.g. H3ac and H3K4me). In association with LDL1/KDM1C, involved in transcriptional gene repression via histone deubiquitination and demethylation. Promotes the concerted epigenetic regulation and repression (e.g. the removal of euchromatic histone acetylation, ubiquitination, and methylation marks) of a set of genes (e.g. GA20OX, WUS, OSR2, ARL and ABI5) that collectively limit plant growth thus stimulating plant growth and increasing cell size. The sequence is that of OVARIAN TUMOR DOMAIN-containing deubiquitinating enzyme 6 from Arabidopsis thaliana (Mouse-ear cress).